The chain runs to 475 residues: Nucleoporin-like protein amo1 (475 aa).

Residues 1–25 (MVVCKYFLQNRCRYGTNCKNQHTVP) form a C3H1-type zinc finger. Over residues 165 to 182 (DKSTSNSTVTSNQFNKPT) the composition is skewed to polar residues. Disordered regions lie at residues 165–208 (DKST…DIFG) and 220–252 (NASP…SSFG). The span at 183–204 (QNSPFNSFSNNNNSFNNNQQAN) shows a compositional bias: low complexity. The span at 220–242 (NASPFSQNTSSNSFTGSNPVQNN) shows a compositional bias: polar residues. The segment covering 243–252 (PSSFGSSSFG) has biased composition (low complexity).

It localises to the nucleus. Involved in the cell polarity process where it is required for the correct termination of microtubule growth at the cell ends during interphase. This Schizosaccharomyces pombe (strain 972 / ATCC 24843) (Fission yeast) protein is Nucleoporin-like protein amo1 (amo1).